Consider the following 158-residue polypeptide: UPF0260 protein RHECIAT_CH0001358 (158 aa).

It belongs to the UPF0260 family.

The sequence is that of UPF0260 protein RHECIAT_CH0001358 from Rhizobium etli (strain CIAT 652).